The sequence spans 47 residues: Putative protein PinH (47 aa).

The 47-residue stretch at 1 to 47 (MWHLVVLLEELCERGINFRALAQSIFAQQWGDECCKSKTICDLKVIV) folds into the Resolvase/invertase-type recombinase catalytic domain.

It belongs to the site-specific recombinase resolvase family.

The chain is Putative protein PinH (pinH) from Escherichia coli (strain K12).